The chain runs to 609 residues: UvrABC system protein C (609 aa).

The GIY-YIG domain maps to 16 to 94; that stretch reads SSPGVYRMYD…IKQYMPRYNV (79 aa). The UVR domain occupies 203-238; sequence LQVMTELVSKMEASALALEYEQAASYRDQIAALRRV.

It belongs to the UvrC family. In terms of assembly, interacts with UvrB in an incision complex.

The protein resides in the cytoplasm. The UvrABC repair system catalyzes the recognition and processing of DNA lesions. UvrC both incises the 5' and 3' sides of the lesion. The N-terminal half is responsible for the 3' incision and the C-terminal half is responsible for the 5' incision. The sequence is that of UvrABC system protein C from Shewanella sediminis (strain HAW-EB3).